The following is a 429-amino-acid chain: Mannose-6-phosphate isomerase (429 aa).

Residues glutamine 109, histidine 111, glutamate 136, and histidine 281 each coordinate Zn(2+). Arginine 300 is a catalytic residue.

It belongs to the mannose-6-phosphate isomerase type 1 family. Zn(2+) is required as a cofactor.

Its subcellular location is the cytoplasm. The enzyme catalyses D-mannose 6-phosphate = D-fructose 6-phosphate. Its pathway is nucleotide-sugar biosynthesis; GDP-alpha-D-mannose biosynthesis; alpha-D-mannose 1-phosphate from D-fructose 6-phosphate: step 1/2. Functionally, involved in the synthesis of the GDP-mannose and dolichol-phosphate-mannose required for a number of critical mannosyl transfer reactions. The protein is Mannose-6-phosphate isomerase (PMI1) of Eremothecium gossypii (strain ATCC 10895 / CBS 109.51 / FGSC 9923 / NRRL Y-1056) (Yeast).